A 195-amino-acid chain; its full sequence is HTH-type transcriptional regulator BetI (195 aa).

The region spanning 8–68 (SIRRRQLIDA…ATMRDITSQL (61 aa)) is the HTH tetR-type domain. Positions 31–50 (TIAQIARRAGVSTGIISHYF) form a DNA-binding region, H-T-H motif.

Its pathway is amine and polyamine biosynthesis; betaine biosynthesis via choline pathway [regulation]. Repressor involved in the biosynthesis of the osmoprotectant glycine betaine. It represses transcription of the choline transporter BetT and the genes of BetAB involved in the synthesis of glycine betaine. This Shigella flexneri serotype 5b (strain 8401) protein is HTH-type transcriptional regulator BetI.